Here is a 236-residue protein sequence, read N- to C-terminus: Small ribosomal subunit protein uS2c (236 aa).

It belongs to the universal ribosomal protein uS2 family.

The protein resides in the plastid. It is found in the chloroplast. This is Small ribosomal subunit protein uS2c (rps2) from Piper cenocladum (Ant piper).